The sequence spans 340 residues: Ribose-phosphate pyrophosphokinase (340 aa).

Residues 47–49 (NGE) and 106–107 (RQ) each bind ATP. Mg(2+) contacts are provided by histidine 140 and aspartate 182. Lysine 206 is a catalytic residue. Residues arginine 208, aspartate 234, and 238 to 242 (DTAGT) each bind D-ribose 5-phosphate.

The protein belongs to the ribose-phosphate pyrophosphokinase family. Class I subfamily. In terms of assembly, homohexamer. Requires Mg(2+) as cofactor.

Its subcellular location is the cytoplasm. It catalyses the reaction D-ribose 5-phosphate + ATP = 5-phospho-alpha-D-ribose 1-diphosphate + AMP + H(+). It functions in the pathway metabolic intermediate biosynthesis; 5-phospho-alpha-D-ribose 1-diphosphate biosynthesis; 5-phospho-alpha-D-ribose 1-diphosphate from D-ribose 5-phosphate (route I): step 1/1. Functionally, involved in the biosynthesis of the central metabolite phospho-alpha-D-ribosyl-1-pyrophosphate (PRPP) via the transfer of pyrophosphoryl group from ATP to 1-hydroxyl of ribose-5-phosphate (Rib-5-P). The chain is Ribose-phosphate pyrophosphokinase from Bifidobacterium longum (strain NCC 2705).